Consider the following 85-residue polypeptide: uncharacterized protein (85 aa).

A run of 2 helical transmembrane segments spans residues 14–34 (FLFGLLAVFIIAASVVTRATI) and 60–80 (IFVYSLVFTVLLAIPLGIYFL).

Its subcellular location is the cell membrane. This is an uncharacterized protein from Escherichia coli O157:H7.